Here is a 431-residue protein sequence, read N- to C-terminus: Glucose-1-phosphate adenylyltransferase (431 aa).

Residues Tyr109, Gly175, 190 to 191 (EK), and Ser208 each bind alpha-D-glucose 1-phosphate.

Belongs to the bacterial/plant glucose-1-phosphate adenylyltransferase family. In terms of assembly, homotetramer.

It catalyses the reaction alpha-D-glucose 1-phosphate + ATP + H(+) = ADP-alpha-D-glucose + diphosphate. It participates in glycan biosynthesis; glycogen biosynthesis. In terms of biological role, involved in the biosynthesis of ADP-glucose, a building block required for the elongation reactions to produce glycogen. Catalyzes the reaction between ATP and alpha-D-glucose 1-phosphate (G1P) to produce pyrophosphate and ADP-Glc. In Alteromonas mediterranea (strain DSM 17117 / CIP 110805 / LMG 28347 / Deep ecotype), this protein is Glucose-1-phosphate adenylyltransferase.